A 205-amino-acid polypeptide reads, in one-letter code: MVEPREQFFQDLLSAVDQQMDTVKNDIKDIMKEKTSFMVSFENFIERYDTMEKNIQDLQNKYEEMAANLMTVMTDTKIQLGAIIAQLEILMINGTPLPAKKTTIKEAMPLPLSNTNNEQTSPPASGKTSETPKKNPTNAMFFTRSEWASSNTFREKFLTPEIQAILDEQFANKTGIERLHAEGLYMWRTQFSDEQKKMVKEMMKK.

The stretch at 10-75 (QDLLSAVDQQ…AANLMTVMTD (66 aa)) forms a coiled coil. The disordered stretch occupies residues 111-138 (PLSNTNNEQTSPPASGKTSETPKKNPTN). The span at 112-138 (LSNTNNEQTSPPASGKTSETPKKNPTN) shows a compositional bias: polar residues.

It belongs to the asfivirus K205R family.

The protein resides in the host cytoplasm. In terms of biological role, induces host endoplasmic reticulum stress and consequently activates autophagy and NF-kappa-B signaling pathway. In turn, may induce autophagy-mediated STING1 degradation and innate immune evasion. This is an uncharacterized protein from Ornithodoros (relapsing fever ticks).